The sequence spans 441 residues: Velvet complex subunit B (441 aa).

A Velvet domain is found at 1-173; sequence MSTLGQGDFE…SDQGVRLRLR (173 aa). Disordered stretches follow at residues 200–220, 234–295, and 341–396; these read GYLPHDANHDLSPNGHSPHHL, RSRS…ETDT, and MPSP…PSYA. Composition is skewed to low complexity over residues 272–283 and 361–375; these read DGASPDSPHPSS and PAGAPGSASSAFSPG.

It belongs to the velvet family. VelB subfamily. As to quaternary structure, component of the heterotrimeric velvet complex composed of laeA, veA and velB; VeA acting as a bridging protein between laeA and velB.

The protein resides in the nucleus. Its subcellular location is the cytoplasm. Functionally, component of the velvet transcription factor complex that controls sexual/asexual developmental ratio in response to light, promoting sexual development in the darkness while stimulating asexual sporulation under illumination. The velvet complex acts as a global regulator for secondary metabolite gene expression and is required for the production of chaetoglobosin A. The polypeptide is Velvet complex subunit B (Chaetomium globosum (strain ATCC 6205 / CBS 148.51 / DSM 1962 / NBRC 6347 / NRRL 1970) (Soil fungus)).